The chain runs to 168 residues: Vasopressin-neurophysin 2-copeptin (168 aa).

Residues 1-23 (MLARMLNTTLSACFLSLLAFSSA) form the signal peptide. A disulfide bond links Cys-24 and Cys-29. Gly-32 is subject to Glycine amide. Disulfide bonds link Cys-45–Cys-89, Cys-48–Cys-62, Cys-56–Cys-79, Cys-63–Cys-69, Cys-96–Cys-108, Cys-102–Cys-120, and Cys-109–Cys-114. Asn-135 carries N-linked (GlcNAc...) asparagine glycosylation.

The protein belongs to the vasopressin/oxytocin family. Interacts with vasopressin receptors V1bR/AVPR1B (Ki=85 pM), V1aR/AVPR1A (Ki=0.6 nM) and V2R/AVPR2 (Ki=4.9 nM). Interacts with oxytocin receptor (OXTR) (Ki=110 nM).

The protein resides in the secreted. Functionally, neurophysin 2 specifically binds vasopressin. Its function is as follows. Vasopressin has a direct antidiuretic action on the kidney, it also causes vasoconstriction of the peripheral vessels. Acts by binding to vasopressin receptors (V1bR/AVPR1B, V1aR/AVPR1A, and V2R/AVPR2). The polypeptide is Vasopressin-neurophysin 2-copeptin (Avp) (Mus musculus (Mouse)).